Reading from the N-terminus, the 84-residue chain is Exodeoxyribonuclease 7 small subunit (84 aa).

It belongs to the XseB family. As to quaternary structure, heterooligomer composed of large and small subunits.

The protein localises to the cytoplasm. The enzyme catalyses Exonucleolytic cleavage in either 5'- to 3'- or 3'- to 5'-direction to yield nucleoside 5'-phosphates.. In terms of biological role, bidirectionally degrades single-stranded DNA into large acid-insoluble oligonucleotides, which are then degraded further into small acid-soluble oligonucleotides. The chain is Exodeoxyribonuclease 7 small subunit from Herminiimonas arsenicoxydans.